The following is a 488-amino-acid chain: Stress activated transcription factor atfs-1 (488 aa).

The N-terminal 23 residues, 1 to 23, are a transit peptide targeting the mitochondrion; the sequence is MFSRVGRLTTFGAQAVSNCPFRR. The tract at residues 138–191 is disordered; that stretch reads SWQNGSSVGHPHGHQQQQQTCQQPPTHSSTTETMHDFSNFGDNMGSPLFQSPSK. Low complexity predominate over residues 142-168; it reads GSSVGHPHGHQQQQQTCQQPPTHSSTT. Lys-342 is covalently cross-linked (Glycyl lysine isopeptide (Lys-Gly) (interchain with G-Cter in smo-1)). A disordered region spans residues 353 to 400; it reads QRDDDDEDYIPASEARRTSSRLNRKSATPTYLRRRDSERSWTPASDDY. Residues 420-483 form the bZIP domain; the sequence is DEETDRRRML…NSMKKELRKM (64 aa). Residues 425–460 are basic motif; the sequence is RRRMLNRIAAVRYREKKRAEKKGRKMEFQEVADRNR. Positions 436–441 match the Nuclear localization signal motif; the sequence is RYREKK. The tract at residues 462–469 is leucine-zipper; sequence LLQKERQL.

Belongs to the bZIP family. May be desumoylated by ulp-4. As to expression, ubiquitously expressed.

The protein resides in the mitochondrion matrix. The protein localises to the cytoplasm. Its subcellular location is the nucleus. In terms of biological role, acts as a transcription factor during mitochondrial stress by activating the mitochondrial unfolded protein response (mtUPR). Induces nuclear and mitochondrial gene transcription, including genes coding for mitochondrial chaperones and proteins involved in glycolysis, amino acid catabolism and innate immunity. Following mitochondrial stress, restores mitochondrial respiratory capacity by limiting the transcription of oxidative phosphorylation (OXPHOS) machinery genes and by promoting the assembly of OXPHOS complexes via the up-regulation of chaperone and assembly factor genes. Component of a feedback loop involving atfs-1, atgl-1 and hlh-11. Acts together with flp-7 to negatively regulate the expression of the transcription regulator hlh-11, to promote expression of atgl-1, and thus atgl-1-dependent fat oxidation in response to mitochondrial stress. In addition, functions with hlh-11 to maintain lifespan. Promotes mtDNA maintenance and propagation of deleterious mtDNA. The sequence is that of Stress activated transcription factor atfs-1 from Caenorhabditis elegans.